Reading from the N-terminus, the 699-residue chain is Extracellular matrix protein 2 (699 aa).

The first 20 residues, 1–20 (MKIAVLFCFFLLIIFQTDFG), serve as a signal peptide directing secretion. One can recognise a VWFC domain in the interval 101-158 (GHCLVKGITMYNKAVWSPEPCTTCLCSDGRVLCDETMCHPQRCPQTVIPEGECCPVCS). Residues 176-186 (EFSGDSSEQRE) are compositionally biased toward basic and acidic residues. The segment at 176 to 316 (EFSGDSSEQR…PAPPRGTLRL (141 aa)) is disordered. Residues 212–224 (QSEEDEEVKEEDT) are compositionally biased toward acidic residues. Residues 243 to 260 (GDSRGGDRKQRPGEERRL) are compositionally biased toward basic and acidic residues. Residues 270–291 (EEEEDEEEEGEEGEEDEEDEED) show a composition bias toward acidic residues. The Cell attachment site motif lies at 294 to 296 (RGD). In terms of domain architecture, LRRNT spans 307–344 (PAPPRGTLRLPSGCSLSYRTISCINAMLTQIPPLTAPQ). LRR repeat units lie at residues 368 to 388 (NLER…GPKA), 394 to 415 (KLMR…LPST), 416 to 436 (LEEL…SLSD), 439 to 459 (QLVT…NPLA), 465 to 484 (SLAY…QGLP), 486 to 507 (SIEE…CFNH), 510 to 530 (KINV…APLA), 536 to 557 (NLES…LPKS), 558 to 578 (LLHL…VFGH), 582 to 602 (GLEY…DRVS), 609 to 630 (SLRE…IQEM), 632 to 653 (ALHF…EICN), and 661 to 684 (NLEH…TFSC). An N-linked (GlcNAc...) asparagine glycan is attached at asparagine 378. N-linked (GlcNAc...) asparagine glycosylation is present at asparagine 449. A glycan (N-linked (GlcNAc...) asparagine) is linked at asparagine 506.

It belongs to the small leucine-rich proteoglycan (SLRP) family. SLRP class I subfamily. As to quaternary structure, interacts with numerous extracellular matrix proteins. Interacts with MSL1 and RASSF1. As to expression, expressed predominantly in adipose tissue as well as female-specific organs such as mammary gland, ovary, and uterus.

The protein resides in the secreted. The protein localises to the extracellular space. It is found in the extracellular matrix. Its function is as follows. Promotes matrix assembly and cell adhesiveness. In Homo sapiens (Human), this protein is Extracellular matrix protein 2 (ECM2).